We begin with the raw amino-acid sequence, 499 residues long: Aspartyl/glutamyl-tRNA(Asn/Gln) amidotransferase subunit B (499 aa).

Belongs to the GatB/GatE family. GatB subfamily. In terms of assembly, heterotrimer of A, B and C subunits.

The enzyme catalyses L-glutamyl-tRNA(Gln) + L-glutamine + ATP + H2O = L-glutaminyl-tRNA(Gln) + L-glutamate + ADP + phosphate + H(+). The catalysed reaction is L-aspartyl-tRNA(Asn) + L-glutamine + ATP + H2O = L-asparaginyl-tRNA(Asn) + L-glutamate + ADP + phosphate + 2 H(+). Its function is as follows. Allows the formation of correctly charged Asn-tRNA(Asn) or Gln-tRNA(Gln) through the transamidation of misacylated Asp-tRNA(Asn) or Glu-tRNA(Gln) in organisms which lack either or both of asparaginyl-tRNA or glutaminyl-tRNA synthetases. The reaction takes place in the presence of glutamine and ATP through an activated phospho-Asp-tRNA(Asn) or phospho-Glu-tRNA(Gln). The polypeptide is Aspartyl/glutamyl-tRNA(Asn/Gln) amidotransferase subunit B (Bifidobacterium animalis subsp. lactis (strain AD011)).